The primary structure comprises 143 residues: Protein SLC31A2 (143 aa).

The Extracellular segment spans residues 1–22 (MPMHFIFSDEAVLLFDFWRVHS). The chain crosses the membrane as a helical span at residues 23-43 (PTGMALSVLVVLLLAVLYEGI). Residues 44–93 (KVGKAKLLHKTLESLPATNSQQFILGPDQDSTGSRSTSDNRTRLRWFLCY) lie on the Cytoplasmic side of the membrane. The residue at position 75 (Thr-75) is a Phosphothreonine. Ser-77 is subject to Phosphoserine. The helical transmembrane segment at 94–114 (FGQSLVHVIQVVIGYFVMLAV) threads the bilayer. The Extracellular portion of the chain corresponds to 115–119 (MSYNT). A helical transmembrane segment spans residues 120–140 (WIFLGVVLGSAVGYYLAYPLL). Residues 141–143 (NMT) lie on the Cytoplasmic side of the membrane.

This sequence belongs to the copper transporter (Ctr) (TC 1.A.56) family. SLC31A subfamily. Oligomer. Interacts with SLC31A1; this interaction stabilizes SLC31A2 and protects it from ubiquitination and the subsequent degradation. Post-translationally, ubiquitinated; ubiquitination and the subsequent proteasomal degradation are prevent by SLC31A1 that stabilizes it.

The protein resides in the membrane. It is found in the cytoplasmic vesicle membrane. It localises to the late endosome membrane. Its subcellular location is the lysosome membrane. The protein localises to the recycling endosome membrane. In terms of biological role, does not function as a copper(1+) importer in vivo. However, in vitro functions as a low-affinity copper(1+) importer. Regulator of SLC31A1 which facilitates the cleavage of the SLC31A1 ecto-domain or which stabilizes the truncated form of SLC31A1 (Truncated CTR1 form), thereby drives the SLC31A1 truncated form-dependent endosomal copper export and modulates the copper and cisplatin accumulation via SLC31A1. The chain is Protein SLC31A2 from Mus musculus (Mouse).